The sequence spans 140 residues: Pro-vaccinia growth factor (140 aa).

Positions 1-18 (MLINYLMLLFAAMIIRSF) are cleaved as a signal peptide. The Extracellular portion of the chain corresponds to 19 to 100 (ADSGNAIETT…SEKPNTTTSY (82 aa)). The N-linked (GlcNAc...) asparagine; by host glycan is linked to Asn-34. The region spanning 41 to 81 (AIRLCGPEGDGYCLHGDCIHARDIDGMYCRCSHGYTGIRCQ) is the EGF-like domain. Intrachain disulfides connect Cys-45-Cys-58, Cys-53-Cys-69, and Cys-71-Cys-80. N-linked (GlcNAc...) asparagine; by host glycosylation occurs at Asn-95. Residues 101 to 121 (IPSPGIMLVLVGIIIITCCLL) traverse the membrane as a helical segment. The Cytoplasmic portion of the chain corresponds to 122 to 140 (SVYRFTRRTKLPIQDMVVP).

It belongs to the orthopoxvirus OPG019 family. In terms of assembly, interacts with host EGFR.

The protein resides in the host membrane. It is found in the secreted. In terms of biological role, stimulates cellular proliferation (hyperplasia)and mobility around infected cells to promote rapid and efficient spread of infection. This effect is beneficial for virus replication in vivo, because poxviruses replicate possibly better in proliferating cells than in quiescent cells. Acts by binding host EGFR, inducing its dimerization, autophosphorylation and leading to activation of several cellular pathways regulating cell proliferation or cell survival. The activation by host EGFR of mitogen activated protein kinases (MAPK) and extracellular-signal regulated kinases (ERK) are essential for the positive effect of vaccinia growth factor on poxvirus virulence in vivo. The polypeptide is Pro-vaccinia growth factor (OPG019) (Homo sapiens (Human)).